We begin with the raw amino-acid sequence, 815 residues long: Ataxin-1 (815 aa).

Over residues 1-41 the composition is skewed to basic and acidic residues; the sequence is MKSNQERSNECLPPKKREIPATSRSSEEKAPTLPSDNHRVE. Positions 1-63 are disordered; that stretch reads MKSNQERSNE…GHGGGRHGPA (63 aa). A Glycyl lysine isopeptide (Lys-Gly) (interchain with G-Cter in SUMO) cross-link involves residue Lys-16. Residues 49–61 show a composition bias toward gly residues; sequence NPGGRGHGGGRHG. 2 positions are modified to phosphoserine: Ser-82 and Ser-88. Disordered regions lie at residues 185 to 270, 329 to 355, and 397 to 424; these read GSLS…PVHL, EKSR…VPHP, and VQQA…PGHR. A Glycyl lysine isopeptide (Lys-Gly) (interchain with G-Cter in SUMO) cross-link involves residue Lys-194. Over residues 197-226 the composition is skewed to low complexity; sequence QQQQQQQQQQQQHQHQQQQQQQQQQQQQQH. Ser-238 and Ser-253 each carry phosphoserine. The span at 243–260 shows a compositional bias: polar residues; sequence QQNQYVHISSSPQNTGRT. The segment at 494 to 604 is self-association; the sequence is VGSTDMEASG…TEDFIQSAEI (111 aa). Positions 538–815 are interaction with USP7; the sequence is LVTQAAYPAM…CIEGRSNVGK (278 aa). Positions 540-766 are RNA-binding; that stretch reads TQAAYPAMVQ…FLTKIEPSKP (227 aa). An AXH domain is found at 562–693; the sequence is SPAAAPPTLP…SLTLKNLKNG (132 aa). Residues Lys-609, Lys-696, and Lys-745 each participate in a glycyl lysine isopeptide (Lys-Gly) (interchain with G-Cter in SUMO) cross-link. Positions 762–798 are disordered; the sequence is EPSKPAATRKRRWSAPESRKLEKSEDEPPLTLPKPSL. Position 775 is a phosphoserine (Ser-775). The Nuclear localization signal signature appears at 794-797; that stretch reads PKPS.

This sequence belongs to the ATXN1 family. Homooligomer. Interacts with CIC. Interacts with ANP32A, PQBP1, UBQLN4, ATXN1L and USP7. Directly interacts with RBPJ; this interaction is disrupted in the presence of Notch intracellular domain. Competes with ATXN1L for RBPJ-binding. Found in a complex with CIC and ATXN1L. In terms of processing, ubiquitinated by UBE3A, leading to its degradation by the proteasome. The presence of expanded poly-Gln repeats in spinocerebellar ataxia 1 (SCA1) patients impairs ubiquitination and degradation, leading to accumulation of ATXN1 in neurons and subsequent toxicity. Phosphorylation at Ser-775 increases the pathogenicity of proteins with an expanded polyglutamine tract. Post-translationally, sumoylation is dependent on nuclear localization and phosphorylation at Ser-775. It is reduced in the presence of an expanded polyglutamine tract. In terms of tissue distribution, widely expressed throughout the body.

The protein resides in the cytoplasm. The protein localises to the nucleus. Its function is as follows. Chromatin-binding factor that repress Notch signaling in the absence of Notch intracellular domain by acting as a CBF1 corepressor. Binds to the HEY promoter and might assist, along with NCOR2, RBPJ-mediated repression. Binds RNA in vitro. May be involved in RNA metabolism. In concert with CIC and ATXN1L, involved in brain development. The polypeptide is Ataxin-1 (ATXN1) (Homo sapiens (Human)).